A 515-amino-acid polypeptide reads, in one-letter code: ATP synthase subunit alpha (515 aa).

ATP is bound at residue 171–178 (GDRQTGKT).

It belongs to the ATPase alpha/beta chains family. As to quaternary structure, F-type ATPases have 2 components, CF(1) - the catalytic core - and CF(0) - the membrane proton channel. CF(1) has five subunits: alpha(3), beta(3), gamma(1), delta(1), epsilon(1). CF(0) has three main subunits: a(1), b(2) and c(9-12). The alpha and beta chains form an alternating ring which encloses part of the gamma chain. CF(1) is attached to CF(0) by a central stalk formed by the gamma and epsilon chains, while a peripheral stalk is formed by the delta and b chains.

It is found in the cell inner membrane. It catalyses the reaction ATP + H2O + 4 H(+)(in) = ADP + phosphate + 5 H(+)(out). Produces ATP from ADP in the presence of a proton gradient across the membrane. The alpha chain is a regulatory subunit. The chain is ATP synthase subunit alpha from Xanthomonas campestris pv. campestris (strain 8004).